Reading from the N-terminus, the 543-residue chain is Neurofilament light polypeptide (543 aa).

Ser2 is subject to N-acetylserine. Residues 2–92 (SSFSYEPYYS…LKSIRTQEKA (91 aa)) form a head region. An O-linked (GlcNAc) threonine glycan is attached at Thr21. Arg23 is modified (asymmetric dimethylarginine; alternate). Arg23 carries the omega-N-methylarginine; alternate modification. Residue Ser27 is glycosylated (O-linked (GlcNAc) serine). Arg30 carries the post-translational modification Omega-N-methylarginine. Tyr43 is subject to Phosphotyrosine. Residues Ser56, Ser67, and Ser103 each carry the phosphoserine modification. The region spanning 90 to 400 (EKAQLQDLND…KLLEGEETRL (311 aa)) is the IF rod domain. The segment at 93 to 124 (QLQDLNDRFASFIERVHELEQQNKVLEAELLV) is coil 1A. The tract at residues 125–137 (LRQKHSEPSRFRA) is linker 1. Positions 138-234 (LYEQEIRDLR…KVHEEEIAEL (97 aa)) are coil 1B. Residues 235–252 (QAQIQYAQISVEMDVTKP) are linker 12. The coil 2A stretch occupies residues 253-271 (DLSAALKDIRAQYEKLAAK). A linker 2 region spans residues 272–280 (NMQNAEEWF). The coil 2B stretch occupies residues 281–396 (KSRFTVLTES…AAYRKLLEGE (116 aa)). The epitope; recognized by IF-specific monoclonal antibody stretch occupies residues 381–391 (ALDIEIAAYRK). Positions 397–443 (ETRLSFTSVGSITSGYSQSSQVFGRSAYGGLQTSSYLMSTRSFPSYY) are tail, subdomain A. Residues 397 to 543 (ETRLSFTSVG…GEEQAAKKKD (147 aa)) form a tail region. Positions 444–543 (TSHVQEEQIE…GEEQAAKKKD (100 aa)) are tail, subdomain B (acidic). The interval 462-543 (KAEEAKDEPP…GEEQAAKKKD (82 aa)) is disordered. The segment covering 471-525 (PSEGEAEEEEKDKEEAEEEEAAEEEEAAKEESEEAKEEEEGGEGEEGEETKEAEE) has biased composition (acidic residues). A phosphoserine mark is found at Ser472 and Ser502. Thr520 is modified (phosphothreonine). The segment covering 526 to 543 (EEKKVEGAGEEQAAKKKD) has biased composition (basic and acidic residues).

Belongs to the intermediate filament family. In terms of assembly, forms homodimers (in vitro). Forms heterodimers with NEFH or NEFM; which can further hetero-oligomerize (in vitro). Forms heterodimers with INA (in vitro). Interacts with ARHGEF28. Interacts with TRIM2. O-glycosylated. In terms of processing, phosphorylated in the head and rod regions by the PKC kinase PKN1, leading to the inhibition of polymerization. Post-translationally, ubiquitinated in the presence of TRIM2 and UBE2D1.

The protein localises to the cell projection. Its subcellular location is the axon. It is found in the cytoplasm. The protein resides in the cytoskeleton. Its function is as follows. Neurofilaments usually contain three intermediate filament proteins: NEFL, NEFM, and NEFH which are involved in the maintenance of neuronal caliber. May additionally cooperate with the neuronal intermediate filament proteins PRPH and INA to form neuronal filamentous networks. The sequence is that of Neurofilament light polypeptide (NEFL) from Homo sapiens (Human).